Here is a 614-residue protein sequence, read N- to C-terminus: Autophagy-related protein 22-1 (614 aa).

A disordered region spans residues 1-29; sequence MQNCTNSPEDQAASVCPPPPQFPGDDTRP. The N-linked (GlcNAc...) asparagine glycan is linked to Asn3. Transmembrane regions (helical) follow at residues 41–61, 126–146, 160–180, and 185–205; these read YGWA…PITL, TASF…ILII, MLLV…LAVV, and LLGG…FVLL. The disordered stretch occupies residues 229 to 254; sequence PTGTSHDSTSTADGPGQTDGTETTSL. Polar residues predominate over residues 230–254; the sequence is TGTSHDSTSTADGPGQTDGTETTSL. Helical transmembrane passes span 291–311, 322–342, 383–403, 417–437, 452–472, 486–506, 523–545, and 554–574; these read GIGI…LVVV, LVLF…AMWL, ILLF…VSGT, AALG…AFSW, IVAC…GFIP, WEMY…SSYC, YALY…GIIT, and AFVF…LVDV.

It belongs to the ATG22 family.

The protein resides in the vacuole membrane. In terms of biological role, vacuolar effluxer which mediate the efflux of amino acids resulting from autophagic degradation. The release of autophagic amino acids allows the maintenance of protein synthesis and viability during nitrogen starvation. This is Autophagy-related protein 22-1 (atg22-1) from Aspergillus niger (strain ATCC MYA-4892 / CBS 513.88 / FGSC A1513).